Consider the following 655-residue polypeptide: Putative calcium up-regulated protein J (655 aa).

The 142-residue stretch at 40-181 folds into the Ricin B-type lectin domain; the sequence is KSRAMLKGDN…DNVCFQWDLE (142 aa).

This sequence belongs to the cup family.

In Dictyostelium discoideum (Social amoeba), this protein is Putative calcium up-regulated protein J (cupJ).